The following is a 501-amino-acid chain: Solute carrier family 2, facilitated glucose transporter member 5 (501 aa).

Methionine 1 bears the N-acetylmethionine mark. Residues 1 to 18 (MEPQDPVKREGRLTPVIV) are Cytoplasmic-facing. The helical transmembrane segment at 19–39 (LATLIAAFGSSFQYGYNVATI) threads the bilayer. Position 32 (tyrosine 32) interacts with D-fructose. Over 40 to 68 (NSPSEFMKDFYNYTYYDRVGEYMNEFYLT) the chain is Extracellular. Asparagine 51 carries N-linked (GlcNAc...) asparagine glycosylation. The helical transmembrane segment at 69–91 (LLWSVTVSMFPFGGFLGSLMVGP) threads the bilayer. At 92 to 98 (LVNNLGR) the chain is on the cytoplasmic side. A helical membrane pass occupies residues 99–119 (KGTLLFNNIFSIVPALLMGFS). Residues 120 to 126 (DLAKSFE) are Extracellular-facing. The chain crosses the membrane as a helical span at residues 127-149 (MIIVARVLVGICAGLSSNVVPMY). At 150–161 (LGELAPKNWRGA) the chain is on the cytoplasmic side. Residues 162–182 (LGVVPQLFITIGILVAQIFGL) traverse the membrane as a helical segment. Glutamine 167 provides a ligand contact to D-fructose. Residues 183–192 (RSLLANEEGW) are Extracellular-facing. The helical transmembrane segment at 193–213 (PILLGLTGIPAVLQLLFLPFF) threads the bilayer. Residues 214–277 (PESPRYLLIQ…LFKMRSLRWQ (64 aa)) are Cytoplasmic-facing. The chain crosses the membrane as a helical span at residues 278–298 (VISIIVLMAGQQLSGVNAIYY). Residues glutamine 288 and 296-298 (IYY) contribute to the D-fructose site. The Extracellular portion of the chain corresponds to 299-313 (YADQIYLSAGVKEDD). The chain crosses the membrane as a helical span at residues 314-334 (VQYVTAGTGAVNVLITVCAIF). The Cytoplasmic segment spans residues 335-342 (VVELMGRR). Residues 343 to 363 (FLLLLGFSVCFTACCVLTGAL) traverse the membrane as a helical segment. At 364–371 (AMQDVISW) the chain is on the extracellular side. Residues 372–394 (MPYVSIACVISYVIGHALGPSPI) traverse the membrane as a helical segment. Histidine 387 contacts D-fructose. Residues 395–412 (PALLVTEIFLQSSRPAAY) lie on the Cytoplasmic side of the membrane. Residues 413-433 (MVAGTVHWLSNFTVGLVFPFI) traverse the membrane as a helical segment. Position 419–420 (419–420 (HW)) interacts with D-fructose. Topologically, residues 434–439 (QVGLGA) are extracellular. The helical transmembrane segment at 440–460 (YSFVIFAVICFLTTVYIFLII) threads the bilayer. Residues 461-501 (PETKSKTFIEINQIFIKMNKVPGVHPEKEELKEFPPSTARQ) are Cytoplasmic-facing.

This sequence belongs to the major facilitator superfamily. Sugar transporter (TC 2.A.1.1) family. Glucose transporter subfamily.

It is found in the apical cell membrane. Its subcellular location is the cell membrane. The protein resides in the sarcolemma. The catalysed reaction is D-fructose(out) = D-fructose(in). Its function is as follows. Functions as a fructose transporter that has only low activity with other monosaccharides. Can mediate the uptake of deoxyglucose, but with low efficiency. Essential for fructose uptake in the small intestine. Plays a role in the regulation of salt uptake and blood pressure in response to dietary fructose. Required for the development of high blood pressure in response to high dietary fructose intake. This Ovis aries (Sheep) protein is Solute carrier family 2, facilitated glucose transporter member 5.